A 170-amino-acid polypeptide reads, in one-letter code: Adenine phosphoribosyltransferase (170 aa).

It belongs to the purine/pyrimidine phosphoribosyltransferase family. As to quaternary structure, homodimer.

The protein resides in the cytoplasm. It carries out the reaction AMP + diphosphate = 5-phospho-alpha-D-ribose 1-diphosphate + adenine. Its pathway is purine metabolism; AMP biosynthesis via salvage pathway; AMP from adenine: step 1/1. Its function is as follows. Catalyzes a salvage reaction resulting in the formation of AMP, that is energically less costly than de novo synthesis. The chain is Adenine phosphoribosyltransferase from Alkaliphilus metalliredigens (strain QYMF).